Reading from the N-terminus, the 227-residue chain is uncharacterized protein (227 aa).

Helical transmembrane passes span 109-128 (MCNVGLVLMMVFAAFYFAGI), 173-192 (AILLSVTLLALTPVIGILLT), and 199-221 (ALRVIFLVIAVEFVYAIFRVMMG).

Its subcellular location is the cell membrane. This is an uncharacterized protein from Archaeoglobus fulgidus (strain ATCC 49558 / DSM 4304 / JCM 9628 / NBRC 100126 / VC-16).